The sequence spans 74 residues: Kappa-scoloptoxin(07)-Ssm2e (74 aa).

An N-terminal signal peptide occupies residues 1–19 (MLVFYALLFVSVFSNTVMG). The propeptide occupies 20-41 (ATIDMPIPKPILREAIEEIDVN).

Belongs to the scoloptoxin-07 family. Post-translationally, contains 3 disulfide bonds. As to expression, expressed by the venom gland.

The protein resides in the secreted. Inhibits voltage-gated potassium channels. The chain is Kappa-scoloptoxin(07)-Ssm2e from Scolopendra mutilans (Chinese red-headed centipede).